Here is a 90-residue protein sequence, read N- to C-terminus: [Phe8]-phyllolitorin (90 aa).

Positions 1–30 (MSAVPFTRVLLISGFLAHLLLSTFVTLTVC) are cleaved as a signal peptide. A propeptide spanning residues 31-48 (KEVTEESDDLSKRNVLQR) is cleaved from the precursor. Gln-49 carries the pyrrolidone carboxylic acid modification. Met-57 bears the Methionine amide mark. The propeptide occupies 61–90 (SLENTNRRSDEDMEISALFRGSPLKVKRSD).

This sequence belongs to the bombesin/neuromedin-B/ranatensin family. Expressed by the skin glands.

It localises to the secreted. The protein is [Phe8]-phyllolitorin of Phyllomedusa sauvagei (Sauvage's leaf frog).